Here is a 100-residue protein sequence, read N- to C-terminus: Nucleoid-associated protein Caur_0522 (100 aa).

It belongs to the YbaB/EbfC family. In terms of assembly, homodimer.

Its subcellular location is the cytoplasm. It is found in the nucleoid. Functionally, binds to DNA and alters its conformation. May be involved in regulation of gene expression, nucleoid organization and DNA protection. This is Nucleoid-associated protein Caur_0522 from Chloroflexus aurantiacus (strain ATCC 29366 / DSM 635 / J-10-fl).